Reading from the N-terminus, the 446-residue chain is B3 domain-containing protein REM12 (446 aa).

Positions 1–46 are disordered; sequence MVLNSSDLGPSRCDIRDLPAPSSTNDQGKTELARKKKVKRSNTEIE. 2 DNA-binding regions (TF-B3) span residues 56–153 and 193–289; these read CFVA…FCST and FMTL…VNTQ. Residues 295–334 form a disordered region; that stretch reads SQQGECSRDSEKESSICAEPSRGNKKWKATNNRKERRDSS. Positions 341-435 form a DNA-binding region, TF-B3 3; the sequence is YVTLTLTPED…TTPVFKFCSN (95 aa).

It is found in the nucleus. This chain is B3 domain-containing protein REM12 (REM12), found in Arabidopsis thaliana (Mouse-ear cress).